The primary structure comprises 788 residues: DNA ligase (788 aa).

Residues 35-39 (DAEYD), 84-85 (SL), and Glu124 each bind NAD(+). Lys126 functions as the N6-AMP-lysine intermediate in the catalytic mechanism. Residues Arg147, Glu184, Lys300, and Lys324 each coordinate NAD(+). Positions 418, 421, 448, and 454 each coordinate Zn(2+). Positions 707 to 788 (AEGLPLAGQT…FIERLAQLGS (82 aa)) constitute a BRCT domain.

This sequence belongs to the NAD-dependent DNA ligase family. LigA subfamily. Mg(2+) is required as a cofactor. Requires Mn(2+) as cofactor.

It carries out the reaction NAD(+) + (deoxyribonucleotide)n-3'-hydroxyl + 5'-phospho-(deoxyribonucleotide)m = (deoxyribonucleotide)n+m + AMP + beta-nicotinamide D-nucleotide.. DNA ligase that catalyzes the formation of phosphodiester linkages between 5'-phosphoryl and 3'-hydroxyl groups in double-stranded DNA using NAD as a coenzyme and as the energy source for the reaction. It is essential for DNA replication and repair of damaged DNA. This Stutzerimonas stutzeri (strain A1501) (Pseudomonas stutzeri) protein is DNA ligase.